The following is a 205-amino-acid chain: uncharacterized protein (205 aa).

This is an uncharacterized protein from Saccharomyces cerevisiae (strain ATCC 204508 / S288c) (Baker's yeast).